Here is a 670-residue protein sequence, read N- to C-terminus: DNA ligase (670 aa).

Residues 33–37 (DAEYD), 82–83 (SL), and Glu-114 each bind NAD(+). Lys-116 serves as the catalytic N6-AMP-lysine intermediate. NAD(+) contacts are provided by Arg-137, Glu-174, Lys-291, and Lys-315. The Zn(2+) site is built by Cys-409, Cys-412, Cys-427, and Cys-433. The BRCT domain occupies 593 to 670 (GAELPLEGKT…TEQDLLELIN (78 aa)).

The protein belongs to the NAD-dependent DNA ligase family. LigA subfamily. Mg(2+) serves as cofactor. The cofactor is Mn(2+).

It catalyses the reaction NAD(+) + (deoxyribonucleotide)n-3'-hydroxyl + 5'-phospho-(deoxyribonucleotide)m = (deoxyribonucleotide)n+m + AMP + beta-nicotinamide D-nucleotide.. DNA ligase that catalyzes the formation of phosphodiester linkages between 5'-phosphoryl and 3'-hydroxyl groups in double-stranded DNA using NAD as a coenzyme and as the energy source for the reaction. It is essential for DNA replication and repair of damaged DNA. The protein is DNA ligase of Vibrio parahaemolyticus serotype O3:K6 (strain RIMD 2210633).